The chain runs to 1038 residues: Ubiquitin carboxyl-terminal hydrolase 36 (1038 aa).

Disordered stretches follow at residues 22-44 (LGGNSSAGSSTDQAKSGEDTNGS) and 107-148 (ANGH…PKPK). Over residues 23 to 44 (GGNSSAGSSTDQAKSGEDTNGS) the composition is skewed to polar residues. Positions 172 to 480 (TGMINVGNTC…NAYIMFFELD (309 aa)) constitute a USP domain. The Nucleophile role is filled by C181. The active-site Proton acceptor is H439. Disordered stretches follow at residues 487-794 (PAAN…SKTG), 818-881 (GSPV…SNGS), 912-985 (LLVD…YNQN), and 1000-1038 (RFGGPGSAKFQQQRALQRHLSAGGGFSRRQPSAQQQQQT). 3 stretches are compositionally biased toward low complexity: residues 502–517 (STTPVPAATVSSPSPT), 546–559 (QQNQQSPQNGLQLG), and 587–606 (NGNKSSSPSSNSSSNHKSIN). Phosphoserine occurs at positions 513 and 515. Positions 629–641 (TTAQLPSMPNMTE) are enriched in polar residues. Phosphothreonine is present on residues T658 and T662. Phosphoserine occurs at positions 672 and 674. Positions 703-728 (TNGHSKTNGSHTNGSASSSVHVNNSK) are enriched in polar residues. The span at 729–746 (QKTDAIDEIFKSLKKSAD) shows a compositional bias: basic and acidic residues. S747 carries the phosphoserine modification. Over residues 747–756 (SDEDDDEEEP) the composition is skewed to acidic residues. Residues 766–776 (PQKQSQSQSKA) show a composition bias toward low complexity. The span at 777 to 786 (PPSPKTPPSP) shows a compositional bias: pro residues. S779 carries the phosphoserine modification. Position 782 is a phosphothreonine (T782). A phosphoserine mark is found at S785 and S819. Residue T825 is modified to Phosphothreonine. The segment covering 832-844 (NPFSSSKPSTDSP) has biased composition (polar residues). At S843 the chain carries Phosphoserine. T846 bears the Phosphothreonine mark. Polar residues predominate over residues 859-881 (ALKSHQQPRVGNGYQSNATSNGS). A compositionally biased stretch (basic and acidic residues) spans 912-923 (LLVDAREQRQRD). A compositionally biased stretch (low complexity) spans 942-953 (SGSAKGNNASNS).

Belongs to the peptidase C19 family. Interacts with atms/PAF1, but not with CycT. Interacts (via C-terminus) with imd (via N-terminus).

It is found in the nucleus. The protein resides in the nucleolus. It localises to the cytoplasm. It carries out the reaction Thiol-dependent hydrolysis of ester, thioester, amide, peptide and isopeptide bonds formed by the C-terminal Gly of ubiquitin (a 76-residue protein attached to proteins as an intracellular targeting signal).. Functionally, hydrolase that deubiquitinates polyubiquitinated target proteins including imd. Required for preventing the constitutive activation of the imd/NF-kappa-B (Imd) signaling cascade under unchalleneged conditions. Deubiquitinates imd linked 'Lys-63' chains which leads its proteasomal degradation and consequently down-regulation of the Imd signaling cascade. Removal of the activating 'Lys-63'-linked chains is likely to enable their replacement with 'Lys-48'-linked chains which act as 'tags' the for proteasomal degradation of imd. Required for maintaining multiple types of adult stem cells, including male and female germline, epithelial follicle cell and intestinal stem cells. May function as a transcriptional repressor by continually deubiquiting histone H2B at the promoters of genes critical for cellular differentiation, thereby preventing histone H3 'Lys-4' trimethylation (H3K4me3). Controls selective autophagy activation by ubiquitinated proteins. This is Ubiquitin carboxyl-terminal hydrolase 36 (scny) from Drosophila melanogaster (Fruit fly).